The primary structure comprises 285 residues: Acetylglutamate kinase (285 aa).

Substrate is bound by residues glycine 64–glycine 65, arginine 86, and asparagine 181.

This sequence belongs to the acetylglutamate kinase family. ArgB subfamily.

Its subcellular location is the cytoplasm. The enzyme catalyses N-acetyl-L-glutamate + ATP = N-acetyl-L-glutamyl 5-phosphate + ADP. It functions in the pathway amino-acid biosynthesis; L-arginine biosynthesis; N(2)-acetyl-L-ornithine from L-glutamate: step 2/4. Its function is as follows. Catalyzes the ATP-dependent phosphorylation of N-acetyl-L-glutamate. This is Acetylglutamate kinase from Clostridium beijerinckii (strain ATCC 51743 / NCIMB 8052) (Clostridium acetobutylicum).